The sequence spans 362 residues: Histidine protein methyltransferase 1 homolog (362 aa).

Residues 28–89 are disordered; the sequence is KSQKGKEDKN…ACEKQPSLKP (62 aa). The segment covering 55 to 73 has biased composition (polar residues); it reads SLGSAASSEDTDSPPSTAD. Phosphoserine occurs at positions 62 and 67. H144 bears the Tele-methylhistidine mark. Residues 158–162, G185, and 206–208 contribute to the S-adenosyl-L-methionine site; these read IWECT and QDY. Positions 237 to 243 match the Nuclear localization signal motif; sequence PAGKRQR. Residues 259–261 and S283 contribute to the S-adenosyl-L-methionine site; that span reads GEW.

This sequence belongs to the methyltransferase superfamily. METTL18 family. Interacts with GRWD1 and members of the heat shock protein 90 and 70 families; these proteins may possibly be methylation substrates for the enzyme. Monomethylated at His-144 through automethylation. Automethylation at His-144 positively regulates the methyltransferase activity toward RPL3. Probably methylated on other residues.

It localises to the cytoplasm. The protein localises to the cytosol. The protein resides in the nucleus. It is found in the nucleolus. The catalysed reaction is L-histidyl-[protein] + S-adenosyl-L-methionine = N(tele)-methyl-L-histidyl-[protein] + S-adenosyl-L-homocysteine + H(+). In terms of biological role, protein-L-histidine N-tele-methyltransferase that specifically monomethylates RPL3, thereby regulating translation elongation. Histidine methylation of RPL3 regulates translation elongation by slowing ribosome traversal on tyrosine codons: slower elongation provides enough time for proper folding of synthesized proteins and prevents cellular aggregation of tyrosine-rich proteins. In Rattus norvegicus (Rat), this protein is Histidine protein methyltransferase 1 homolog.